The chain runs to 1373 residues: MVSLRDNIEAQPLSHNRRIRKNFGHINLVADIPNLIEIQKNSYEKNFLQLNIKDSERKNKGLQSILNSIFPISDSSNIANLEFVKYEFDTPKYDVEECSQRSLSYAAPLKVTLRLSIWDIDEDTGTREIKGIKEQEVYMGDIPLMTKNGTFIINGTERVVVSQMHRSPGVFFYHDEGKVHSSGKLLYSARVIPYRGSWLDLEFDAKDVIYFRIDRKRKLYITTLLRAIGMSTEEIIKFYYNSVTYKLVKNKGWAVKFIPQHITAHRLTSDLVDADTGNILLKAGQKITPRLAKKYFGEGLNNILVAHETLIGKYLSEDLRDPTSDEVLAKIGEMITADMLNVINALKIKNVNVLVINPQSGPYIRNTLFADKNQDREAALCDIFRVLRPGEPANIEAAESLFYNLFFDVERYDLSEVGRIKMNSRLELNISEEVTVLTIDDIKNIVRVLVELKDGKGIIDDIDHLGNRRVRSVGELIENQFRIGLVRMEKSVIERMSAGDVDTVMPHDLVNSKILVSVVKEFFNTSQLSQFMDQTNPLSEITHKRRLSALGPGGLSRDRAGFEVRDVHPTHYGRICPIETPEGQNIGLINSMATYARINKHGFIESPYRRVKDGCVTDEVVYLSAIEEGKYKIGQANSKVNKDGKLQGEFINCRVEGGNFVMVEPYEVDFIDVTPMQVVSVAASLIPFLENDDANRALMGSNMQRQAVPLIKTDAPFVGTGVEGVVAKDSGASVLALHDGIVEQVDSNRIVIRTLEQKVDGSPSVDIYNLLKFQKSNHNTCINQKPLVKVGHYVKKNDIIADGPSTDNGEIALGRNVLVAFLPWNGYNFEDSILISERIVKEDVFTSIHIEEFEVIARDTRLGPEEITRDIPNVSEEALRHLDEVGIIYIGAEVKAGDILVGKVTPKSESPITPEEKLLRAIFGEKAFDVKDSSLHVPSGVSGTVVEVRVFSRRGVEKDQRAIAIEKQQIEKLAKDRDDELEIIEHFVFSWLEKLLVGQVIINGPKQVKVGQTITTEMLKGLSKGQFWQITVEDANVMNEIEQIKTHYDEKKEALDKRFATKVEKLQSGDDLPQGALKVVKVFIATKHKLQPGDKMAGRHGNKGVISRIVPEEDMPFLEDGTVVDIVLNPLGLPSRMNIGQILETHLGWASINLAKKISTLVKEYKNKHIGIEQIKKFLIELYGENINSILERPEEEIISFCKKVSKGVHFATPVFDGAKVQDVKDMLKLAGQDPSGQVKLIDGRTGEYFDRLVTVGQKYLLKLHHLVDNKIHSRSIGPYSLVTQQPLGGKSHFGGQRFGEMECWALQAYGAAYTLQEMLTVKSDDVNGRIKTYDSIVRGENNFESGIPESFNVMIKEFRSLCLNVKLEVTSS.

Belongs to the RNA polymerase beta chain family. In terms of assembly, the RNAP catalytic core consists of 2 alpha, 1 beta, 1 beta' and 1 omega subunit. When a sigma factor is associated with the core the holoenzyme is formed, which can initiate transcription.

It carries out the reaction RNA(n) + a ribonucleoside 5'-triphosphate = RNA(n+1) + diphosphate. Functionally, DNA-dependent RNA polymerase catalyzes the transcription of DNA into RNA using the four ribonucleoside triphosphates as substrates. In Rickettsia massiliae (strain Mtu5), this protein is DNA-directed RNA polymerase subunit beta.